A 401-amino-acid polypeptide reads, in one-letter code: MALIIQKFGGTSVANIDRIKKIVPIIKTEIAKNNQVIVVVSAMAGVTNQLVTLCNELSSLNNISQFAEYDVALSSGEIVTASLLALALQEEDIKARSFLAWQLPMLTDNNHSKALVESITTDLLEKYLQLNTIPIIAGFQGINKSNRLTTLGRGGSDTTAALIAAAMKADRCDIYTDVEGIFTADPRIIPNAKKIKEIDFLEMLELASSGAQVLHPRAGELVMRYKIDMRVLSTFSPDTEGTLITSKDKNMENGIINSITSNKNLLKISVKSMSLSFLQVANMITQNNNHIEFMQEIKNNEEYSFITNLTDKNNLQALLTNLKDDKQIQYFTFDTEIATISLIGYGIKNDCKLLETILSKLTNDNINVHMIQLSEVKITLFINDQDTEKTIFNLYNLFKIS.

It belongs to the aspartokinase family.

The catalysed reaction is L-aspartate + ATP = 4-phospho-L-aspartate + ADP. The protein operates within amino-acid biosynthesis; L-lysine biosynthesis via DAP pathway; (S)-tetrahydrodipicolinate from L-aspartate: step 1/4. It participates in amino-acid biosynthesis; L-methionine biosynthesis via de novo pathway; L-homoserine from L-aspartate: step 1/3. It functions in the pathway amino-acid biosynthesis; L-threonine biosynthesis; L-threonine from L-aspartate: step 1/5. In Rickettsia conorii (strain ATCC VR-613 / Malish 7), this protein is Aspartokinase (lysC).